The primary structure comprises 271 residues: Glutamate racemase (271 aa).

Substrate contacts are provided by residues 10 to 11 (DS) and 42 to 43 (YG). Cysteine 73 (proton donor/acceptor) is an active-site residue. Substrate is bound at residue 74-75 (NT). Cysteine 183 functions as the Proton donor/acceptor in the catalytic mechanism. 184 to 185 (TH) serves as a coordination point for substrate.

This sequence belongs to the aspartate/glutamate racemases family.

The enzyme catalyses L-glutamate = D-glutamate. The protein operates within cell wall biogenesis; peptidoglycan biosynthesis. In terms of biological role, provides the (R)-glutamate required for cell wall biosynthesis. This is Glutamate racemase from Streptococcus thermophilus (strain CNRZ 1066).